The following is a 155-amino-acid chain: Pathogenesis-related protein STH-21 (155 aa).

This sequence belongs to the BetVI family.

This chain is Pathogenesis-related protein STH-21 (STH-21), found in Solanum tuberosum (Potato).